A 221-amino-acid polypeptide reads, in one-letter code: Small ribosomal subunit protein uS4c (221 aa).

The tract at residues 26 to 53 (RKRTDNRCMPGQHRKKRNDSTKKTKNSK) is disordered. Residues 37 to 53 (QHRKKRNDSTKKTKNSK) are compositionally biased toward basic residues. In terms of domain architecture, S4 RNA-binding spans 103-161 (MRLDNIVFRLGMAPTIPAARQLVNHGHIVVNNKKVDISSYQCQSQDVISVTKNKTIRTL).

The protein belongs to the universal ribosomal protein uS4 family. Part of the 30S ribosomal subunit. Contacts protein S5. The interaction surface between S4 and S5 is involved in control of translational fidelity.

The protein resides in the plastid. It is found in the chloroplast. Functionally, one of the primary rRNA binding proteins, it binds directly to 16S rRNA where it nucleates assembly of the body of the 30S subunit. With S5 and S12 plays an important role in translational accuracy. The polypeptide is Small ribosomal subunit protein uS4c (rps4) (Pleurastrum terricola (Filamentous green alga)).